Here is a 141-residue protein sequence, read N- to C-terminus: Succinate dehydrogenase assembly factor 2, mitochondrial (141 aa).

Belongs to the SDHAF2 family. Interacts with the flavoprotein subunit within the SDH catalytic dimer.

It is found in the mitochondrion matrix. Its function is as follows. Plays an essential role in the assembly of succinate dehydrogenase (SDH), an enzyme complex (also referred to as respiratory complex II) that is a component of both the tricarboxylic acid (TCA) cycle and the mitochondrial electron transport chain, and which couples the oxidation of succinate to fumarate with the reduction of ubiquinone (coenzyme Q) to ubiquinol. Required for flavinylation (covalent attachment of FAD) of the flavoprotein subunit of the SDH catalytic dimer. The polypeptide is Succinate dehydrogenase assembly factor 2, mitochondrial (Dictyostelium discoideum (Social amoeba)).